Reading from the N-terminus, the 101-residue chain is MAKLSLINRDIKRAKLADKYAAKRAELKAIIDDQSKTDEERYQARLKLQQLPRNANPTRQRNRCVVTGRPRGVFRKFGLTRHKLREMAMKGEVPGMTKASW.

The protein belongs to the universal ribosomal protein uS14 family. Part of the 30S ribosomal subunit. Contacts proteins S3 and S10.

Binds 16S rRNA, required for the assembly of 30S particles and may also be responsible for determining the conformation of the 16S rRNA at the A site. The sequence is that of Small ribosomal subunit protein uS14 from Bordetella parapertussis (strain 12822 / ATCC BAA-587 / NCTC 13253).